A 441-amino-acid polypeptide reads, in one-letter code: Leucine-rich repeat-containing protein 17 (441 aa).

Positions 1-18 are cleaved as a signal peptide; it reads MRVVTIVILLCFCKAAEL. LRR repeat units lie at residues 82-103, 106-127, and 130-151; these read DLLH…MFSK, KLKS…AFFG, and KLTT…VFIY. The 52-residue stretch at 163–214 folds into the LRRCT 1 domain; the sequence is NPWHCTCEIETLISMLQIPRNRNLGNYAKCESPQEQKNKKLRQIKSEQLCNE. The LRRNT domain occupies 225 to 268; that stretch reads QVSGRPPVIKPEVDSTFCHNYVFPIQTLDCKRKELKKVPNNIPP. LRR repeat units lie at residues 269–290, 293–314, and 317–340; these read DIVK…EFED, ELKK…AFLG, and HLEE…EDLY. The LRRCT 2 domain maps to 350 to 402; sequence NPWRCDYNIHYLYYWLKHHYNVHFNGLECKTPEEYKGWSVGKYIRSYYEECPK.

As to expression, expressed in osteoblast cell lines. Well expressed in ovary, heart, pancreas, skeletal muscle, lung, and fetal kidney and lung and only at the basal levels in the other tissues examined including adult kidney. More expressed in S-type neuroblastoma cells than in N-type neuroblastoma cells.

Its subcellular location is the secreted. The protein localises to the extracellular space. In terms of biological role, involved in bone homeostasis. Acts as a negative regulator of RANKL-induced osteoclast precursor differentiation from bone marrow precursors. The polypeptide is Leucine-rich repeat-containing protein 17 (LRRC17) (Homo sapiens (Human)).